The sequence spans 89 residues: Small ribosomal subunit protein bS20 (89 aa).

Positions 1 to 26 are disordered; that stretch reads MANIKASKKDALTSEKRRKKNSSRRS. The segment covering 16 to 26 has biased composition (basic residues); sequence KRRKKNSSRRS.

This sequence belongs to the bacterial ribosomal protein bS20 family.

Binds directly to 16S ribosomal RNA. In Buchnera aphidicola subsp. Acyrthosiphon pisum (strain 5A), this protein is Small ribosomal subunit protein bS20.